Consider the following 633-residue polypeptide: Pesticidal crystal protein Cry2Ad (633 aa).

Belongs to the delta endotoxin family.

Its function is as follows. Promotes colloidosmotic lysis by binding to the midgut epithelial cells of insects. The protein is Pesticidal crystal protein Cry2Ad (cry2Ad) of Bacillus thuringiensis.